Here is a 647-residue protein sequence, read N- to C-terminus: A-type voltage-gated potassium channel KCND1 (647 aa).

Residues 1-183 (MAAGLATWLP…RAFENPHTST (183 aa)) lie on the Cytoplasmic side of the membrane. Positions 2–20 (AAGLATWLPFARAAAVGWL) are interaction with KCNIP1, KCNIP2, and other family members. 3 residues coordinate Zn(2+): H104, C131, and C132. Residues 144-163 (AERLAEDEEAEQAGDGPALP) are disordered. A helical transmembrane segment spans residues 184–205 (AALVFYYVTGFFIAVSVIANVV). The Extracellular portion of the chain corresponds to 206-230 (ETIPCRGSARRSSREQPCGERFPQA). The helical transmembrane segment at 231 to 252 (FFCMDTACVLIFTGEYLLRLFA) threads the bilayer. Residues 253–263 (APSRCRFLRSV) are Cytoplasmic-facing. The helical transmembrane segment at 264 to 284 (MSLIDVVAILPYYIGLLVPKN) threads the bilayer. Residues 285–287 (DDV) lie on the Extracellular side of the membrane. Residues 288-308 (SGAFVTLRVFRVFRIFKFSRH) form a helical; Voltage-sensor membrane-spanning segment. The Cytoplasmic segment spans residues 309–323 (SQGLRILGYTLKSCA). An S4-S5 linker region spans residues 310-323 (QGLRILGYTLKSCA). Residues 324–345 (SELGFLLFSLTMAIIIFATVMF) form a helical membrane-spanning segment. Topologically, residues 346–359 (YAEKGTNKTNFTSI) are extracellular. Residues N352 and N355 are each glycosylated (N-linked (GlcNAc...) asparagine). The helical intramembrane region spans 360–371 (PAAFWYTIVTMT). The short motif at 372-377 (TLGYGD) is the Selectivity filter element. Residues 372–379 (TLGYGDMV) lie within the membrane without spanning it. At 380–386 (PSTIAGK) the chain is on the extracellular side. The helical transmembrane segment at 387–415 (IFGSICSLSGVLVIALPVPVIVSNFSRIY) threads the bilayer. Topologically, residues 416–647 (HQNQRADKRR…FPETVKISSL (232 aa)) are cytoplasmic. Residue S458 is modified to Phosphoserine. Positions 474-489 (FEQQHHHLLHCLEKTT) are required for dendritic targeting. The span at 506-524 (VSPGGRTSRSTSVSSQPVG) shows a compositional bias: low complexity. Residues 506 to 531 (VSPGGRTSRSTSVSSQPVGPGSLLSS) form a disordered region. The residue at position 555 (S555) is a Phosphoserine. A disordered region spans residues 601-634 (IPTPPANTPDESQPSSPGGGGRAGSTLRNSSLGT).

The protein belongs to the potassium channel family. D (Shal) (TC 1.A.1.2) subfamily. Kv4.1/KCND1 sub-subfamily. In terms of assembly, component of heteromultimeric potassium channels. Identified in potassium channel complexes containing KCND1, KCND2, KCND3, KCNIP1, KCNIP2, KCNIP3, KCNIP4, DPP6 and DPP10. In terms of tissue distribution, widely expressed. Highly expressed in brain, in particular in cerebellum and thalamus; detected at lower levels in the other parts of the brain.

Its subcellular location is the cell membrane. It carries out the reaction K(+)(in) = K(+)(out). In terms of biological role, A-type voltage-gated potassium channel that mediates transmembrane potassium transport in excitable membranes in the brain. Mediates A-type current I(SA) in suprachiasmatic nucleus (SCN) neurons. Exhibits a low-threshold A-type current with a hyperpolarized steady-state inactivation midpoint and the recovery process was steeply voltage-dependent, with recovery being markedly faster at more negative potentials. May regulates repetitive firing rates in the suprachiasmatic nucleus (SCN) neurons and circadian rhythms in neuronal excitability and behavior. Contributes to the regulation of the circadian rhythm of action potential firing in suprachiasmatic nucleus neurons, which regulates the circadian rhythm of locomotor activity. The regulatory subunit KCNIP1 modulates the kinetics of channel inactivation, increases the current amplitudes and accelerates recovery from inactivation, shifts activation in a depolarizing direction. The regulatory subunit DPP10 decreases the voltage sensitivity of the inactivation channel gating. The protein is A-type voltage-gated potassium channel KCND1 of Homo sapiens (Human).